The primary structure comprises 91 residues: MKKLLSALALAAVVAPVWAATQTVTLSVPGMTCSACPITVKKAISKVDGVSKVDVTFETREAVVTFDDAKTSVQKLTKATEDAGYPSSVKN.

The first 19 residues, 1–19 (MKKLLSALALAAVVAPVWA), serve as a signal peptide directing secretion. The region spanning 22 to 88 (QTVTLSVPGM…ATEDAGYPSS (67 aa)) is the HMA domain. Positions 33 and 36 each coordinate Hg(2+).

It belongs to the MerP family. In terms of assembly, monomer.

It localises to the periplasm. Functionally, involved in mercury resistance. Acts as a mercury scavenger that specifically binds to a mercuric ion in the periplasm and probably passes it to the cytoplasmic mercuric reductase MerA via the mercuric transport protein MerT. The chain is Mercuric transport protein periplasmic component from Pseudomonas fluorescens.